Consider the following 56-residue polypeptide: Small ribosomal subunit protein uS14 (56 aa).

Zn(2+) contacts are provided by cysteine 21, cysteine 24, cysteine 39, and cysteine 42.

This sequence belongs to the universal ribosomal protein uS14 family. Zinc-binding uS14 subfamily. Part of the 30S ribosomal subunit. Requires Zn(2+) as cofactor.

Binds 16S rRNA, required for the assembly of 30S particles. The sequence is that of Small ribosomal subunit protein uS14 from Methanospirillum hungatei JF-1 (strain ATCC 27890 / DSM 864 / NBRC 100397 / JF-1).